A 406-amino-acid chain; its full sequence is Fructose-1,6-bisphosphatase, chloroplastic (406 aa).

The N-terminal 47 residues, 1–47 (MAAAATTSSHLLLLSRQQAAASLQCGLSFRRQPGRLAGGSSAPSVRC), are a transit peptide targeting the chloroplast. 5 residues coordinate Mg(2+): glutamate 128, glutamate 157, aspartate 178, leucine 180, and aspartate 181. 181 to 184 (DGSS) is a binding site for substrate. A disulfide bond links cysteine 222 and cysteine 227. 5 residues coordinate substrate: asparagine 286, tyrosine 318, tyrosine 336, tyrosine 338, and lysine 348. Glutamate 354 lines the Mg(2+) pocket.

Belongs to the FBPase class 1 family. Homotetramer. Requires Mg(2+) as cofactor.

Its subcellular location is the plastid. It localises to the chloroplast stroma. The enzyme catalyses beta-D-fructose 1,6-bisphosphate + H2O = beta-D-fructose 6-phosphate + phosphate. Its pathway is carbohydrate biosynthesis; Calvin cycle. With respect to regulation, inhibited by sodium chloride. Functionally, catalyzes the irreversible reaction from fructose-1,6-bisphosphate to fructose-6-phosphate and inorganic phosphate, to regenerate the primary CO(2) acceptor molecule, ribulose-1,5-bisphosphate. Involved in the regulation of photosynthetic performance and sucrose synthesis. The sequence is that of Fructose-1,6-bisphosphatase, chloroplastic from Oryza sativa subsp. indica (Rice).